The following is a 348-amino-acid chain: Heat-inducible transcription repressor HrcA (348 aa).

This sequence belongs to the HrcA family.

Its function is as follows. Negative regulator of class I heat shock genes (grpE-dnaK-dnaJ and groELS operons). Prevents heat-shock induction of these operons. The chain is Heat-inducible transcription repressor HrcA from Lacticaseibacillus casei (strain BL23) (Lactobacillus casei).